Consider the following 612-residue polypeptide: UvrABC system protein C (612 aa).

Residues Thr20–Ile98 enclose the GIY-YIG domain. A UVR domain is found at Ser208–Leu243.

It belongs to the UvrC family. As to quaternary structure, interacts with UvrB in an incision complex.

It is found in the cytoplasm. In terms of biological role, the UvrABC repair system catalyzes the recognition and processing of DNA lesions. UvrC both incises the 5' and 3' sides of the lesion. The N-terminal half is responsible for the 3' incision and the C-terminal half is responsible for the 5' incision. In Francisella tularensis subsp. holarctica (strain LVS), this protein is UvrABC system protein C.